A 342-amino-acid chain; its full sequence is Tetraacyldisaccharide 4'-kinase (342 aa).

Residue 68–75 (TVGGTGKT) participates in ATP binding.

Belongs to the LpxK family.

It catalyses the reaction a lipid A disaccharide + ATP = a lipid IVA + ADP + H(+). It participates in glycolipid biosynthesis; lipid IV(A) biosynthesis; lipid IV(A) from (3R)-3-hydroxytetradecanoyl-[acyl-carrier-protein] and UDP-N-acetyl-alpha-D-glucosamine: step 6/6. Its function is as follows. Transfers the gamma-phosphate of ATP to the 4'-position of a tetraacyldisaccharide 1-phosphate intermediate (termed DS-1-P) to form tetraacyldisaccharide 1,4'-bis-phosphate (lipid IVA). This Burkholderia lata (strain ATCC 17760 / DSM 23089 / LMG 22485 / NCIMB 9086 / R18194 / 383) protein is Tetraacyldisaccharide 4'-kinase.